The sequence spans 122 residues: Large ribosomal subunit protein uL14 (122 aa).

It belongs to the universal ribosomal protein uL14 family. Part of the 50S ribosomal subunit. Forms a cluster with proteins L3 and L19. In the 70S ribosome, L14 and L19 interact and together make contacts with the 16S rRNA in bridges B5 and B8.

In terms of biological role, binds to 23S rRNA. Forms part of two intersubunit bridges in the 70S ribosome. This Chlamydia muridarum (strain MoPn / Nigg) protein is Large ribosomal subunit protein uL14.